Consider the following 507-residue polypeptide: Cytochrome P450 4A14 (507 aa).

A propeptide spans Met1 to Ser4 (removed in mature form). Residue Glu318 participates in heme binding. The residue at position 437 (Ser437) is a Phosphoserine. Residue Cys454 coordinates heme.

Belongs to the cytochrome P450 family. Requires heme as cofactor.

The protein localises to the endoplasmic reticulum membrane. It is found in the microsome membrane. It carries out the reaction an omega-methyl-long-chain fatty acid + reduced [NADPH--hemoprotein reductase] + O2 = an omega-hydroxy-long-chain fatty acid + oxidized [NADPH--hemoprotein reductase] + H2O + H(+). It catalyses the reaction dodecanoate + reduced [NADPH--hemoprotein reductase] + O2 = (11R)-hydroxydodecanoate + oxidized [NADPH--hemoprotein reductase] + H2O + H(+). The catalysed reaction is dodecanoate + reduced [NADPH--hemoprotein reductase] + O2 = 12-hydroxydodecanoate + oxidized [NADPH--hemoprotein reductase] + H2O + H(+). The enzyme catalyses tetradecanoate + reduced [NADPH--hemoprotein reductase] + O2 = 14-hydroxytetradecanoate + oxidized [NADPH--hemoprotein reductase] + H2O + H(+). The protein operates within lipid metabolism; fatty acid metabolism. A cytochrome P450 monooxygenase that catalyzes omega and omega-1 hydroxylation of saturated fatty acids. Exhibits preferential omega versus omega-1 regioselectivity and (R) versus (S) stereoselectivity for hydroxylation of dodecanoic (lauric) acid. Mechanistically, uses molecular oxygen inserting one oxygen atom into a substrate, and reducing the second into a water molecule, with two electrons provided by NADPH via cytochrome P450 reductase (CPR; NADPH-ferrihemoprotein reductase). In Rattus norvegicus (Rat), this protein is Cytochrome P450 4A14.